We begin with the raw amino-acid sequence, 619 residues long: Eukaryotic translation initiation factor 2-alpha kinase 1 (619 aa).

The disordered stretch occupies residues 1–40; sequence MLGGSSVDGERDTDDDAAGAVAAPPAIDFPAEVSDPKYDE. Low complexity predominate over residues 18–28; sequence AGAVAAPPAID. The SIFI-degron motif lies at 85-104; that stretch reads LHSKQVFKLLCQTFIKMGLL. The Protein kinase domain occupies 167-580; it reads FEELAILGKG…ALQLLQSELF (414 aa). ATP-binding positions include 173–181 and lysine 196; that span reads LGKGGYGRV. Threonine 283 carries the post-translational modification Phosphothreonine. The stretch at 408-413 is one HRM 1 repeat; that stretch reads ACPYVM. The Proton acceptor role is filled by aspartate 440. A phosphothreonine; by autocatalysis mark is found at threonine 483, threonine 485, and threonine 490. The stretch at 549 to 554 is one HRM 2 repeat; that stretch reads RCPVQA.

Belongs to the protein kinase superfamily. Ser/Thr protein kinase family. GCN2 subfamily. Synthesized in an inactive form that binds to the N-terminal domain of CDC37. Has to be associated with a multiprotein complex containing Hsp90, CDC37 and PPP5C for maturation and activation by autophosphorylation. The phosphatase PPP5C modulates this activation. Homodimer; homodimerizes in presence of heme, forming a disulfide-linked inactive homodimer. Interacts with DELE1; binds both to full-length DELE1 and processed form of DELE1 (S-DELE1) in response to stress, leading to activate its protein kinase activity and trigger the integrated stress response (ISR). In terms of processing, activated by autophosphorylation; phosphorylated predominantly on serine and threonine residues, but also on tyrosine residues. Autophosphorylation at Thr-485 is required for kinase activation. The active autophosphorylated form apparently is largely refractory to cellular heme fluctuations. Ubiquitinated and degraded by the SIFI complex once the mitochondrial stress has been resolved, thereby providing stress response silencing. Within the SIFI complex, UBR4 initiates ubiquitin chain that are further elongated or branched by KCMF1. As to expression, expressed predominantly in erythroid cells, mature reticulocytes, as well as fetal liver nucleated erythroid cells. At much lower levels, expressed in hepatocytes and bone marrow-derived macrophages (at protein level).

It localises to the cytoplasm. The catalysed reaction is L-seryl-[protein] + ATP = O-phospho-L-seryl-[protein] + ADP + H(+). It catalyses the reaction L-threonyl-[protein] + ATP = O-phospho-L-threonyl-[protein] + ADP + H(+). In normal conditions, the protein kinase activity is inhibited; inhibition is relieved by various stress conditions. Inhibited by heme: in presence of heme, forms a disulfide-linked inactive homodimer. Heme depletion relieves inhibition and stimulates kinase activity by autophosphorylation. Inhibited by the heme metabolites biliverdin and bilirubin. Induced by oxidative stress generated by arsenite treatment. Binding of nitric oxide (NO) to the heme iron in the N-terminal heme-binding domain activates the kinase activity, while binding of carbon monoxide (CO) suppresses kinase activity. Protein kinase activity is also activated upon binding to DELE1 in response to various stress, triggering the integrated stress response (ISR): activated by full-length DELE1 in response to iron deficiency, while it is activated by the processed form of DELE1 (S-DELE1) in response to mitochondrial stress. Metabolic-stress sensing protein kinase that phosphorylates the alpha subunit of eukaryotic translation initiation factor 2 (EIF2S1/eIF-2-alpha) in response to various stress conditions. Key activator of the integrated stress response (ISR) required for adaptation to various stress, such as heme deficiency, oxidative stress, osmotic shock, mitochondrial dysfunction and heat shock. EIF2S1/eIF-2-alpha phosphorylation in response to stress converts EIF2S1/eIF-2-alpha in a global protein synthesis inhibitor, leading to a global attenuation of cap-dependent translation, while concomitantly initiating the preferential translation of ISR-specific mRNAs, such as the transcriptional activator ATF4, and hence allowing ATF4-mediated reprogramming. Acts as a key sensor of heme-deficiency: in normal conditions, binds hemin via a cysteine thiolate and histidine nitrogenous coordination, leading to inhibit the protein kinase activity. This binding occurs with moderate affinity, allowing it to sense the heme concentration within the cell: heme depletion relieves inhibition and stimulates kinase activity, activating the ISR. Thanks to this unique heme-sensing capacity, plays a crucial role to shut off protein synthesis during acute heme-deficient conditions. In red blood cells (RBCs), controls hemoglobin synthesis ensuring a coordinated regulation of the synthesis of its heme and globin moieties. It thereby plays an essential protective role for RBC survival in anemias of iron deficiency. Iron deficiency also triggers activation by full-length DELE1. Also activates the ISR in response to mitochondrial dysfunction: HRI/EIF2AK1 protein kinase activity is activated upon binding to the processed form of DELE1 (S-DELE1), thereby promoting the ATF4-mediated reprogramming. Also acts as an activator of mitophagy in response to mitochondrial damage: catalyzes phosphorylation of eIF-2-alpha (EIF2S1) following activation by S-DELE1, thereby promoting mitochondrial localization of EIF2S1, triggering PRKN-independent mitophagy. The sequence is that of Eukaryotic translation initiation factor 2-alpha kinase 1 from Mus musculus (Mouse).